The sequence spans 421 residues: Diaminobutyrate--2-oxoglutarate transaminase (421 aa).

The residue at position 267 (Lys267) is an N6-(pyridoxal phosphate)lysine.

It belongs to the class-III pyridoxal-phosphate-dependent aminotransferase family. In terms of assembly, homohexamer. Requires pyridoxal 5'-phosphate as cofactor.

The catalysed reaction is L-2,4-diaminobutanoate + 2-oxoglutarate = L-aspartate 4-semialdehyde + L-glutamate. Its pathway is amine and polyamine biosynthesis; ectoine biosynthesis; L-ectoine from L-aspartate 4-semialdehyde: step 1/3. Catalyzes reversively the conversion of L-aspartate beta-semialdehyde (ASA) to L-2,4-diaminobutyrate (DABA) by transamination with L-glutamate. Seems to use L-glutamate specifically as the amino group donor to ASA, as it is not active with L-alanine, L-glutamine, L-aspartate and L-lysine, and is only poorly active with L-homoserine. In the reverse reaction, gamma-aminobutyric acid (GABA) and L-ornithine can also be used as amino group donors to 2-oxoglutarate, but with a reduced activity compared to that with DABA. This is Diaminobutyrate--2-oxoglutarate transaminase (ectB) from Halomonas elongata (strain ATCC 33173 / DSM 2581 / NBRC 15536 / NCIMB 2198 / 1H9).